Here is a 386-residue protein sequence, read N- to C-terminus: MDQVQHPSVMQKVAGQLFRSSHSQDFQGYNGSFRSPALYQRRAAYGNYSNAALQHPVRAFGDLSMVPSTASAICVQAPAEKGFSSFAIDFLMGGVSAAVSKTAAAPIERVKLLIQNQDEMIKSGRLSEPYKGIGDCFKRTIKDEGFGSLWRGNTANVIRYFPTQALNFAFKDYFKRLFNFKKDRDGYWKWFAGNLASGGAAGASSLLFVYSLDYARTRLANDAKAAKKGGERQFNGLVDVYRKTLKSDGIAGLYRGFNISCVGIIVYRGLYFGMYDSLKPVLLTGSMQDSFFASFVLGWLITNGAALASYPIDTVRRRMMMTSGKAVKYKSSLDAFSQILKNEGGKSLFKGAGSNILRAIAGAGVLAGYDKLQLIVFGKKYGSGGA.

The N-terminal 76 residues, M1 to Q76, are a transit peptide targeting the mitochondrion. Solcar repeat units follow at residues S84–L177, K189–V281, and D289–I375. 5 helical membrane passes run F86–L113, T154–F178, Y187–L207, F257–L278, and F292–I312. 2 residues coordinate ADP: R159 and K171. An ADP-binding site is contributed by R316. Residues R316–M321 are important for transport activity. A Nucleotide carrier signature motif motif is present at residues R316–M321. The chain crosses the membrane as a helical span at residues A352–L372.

The protein belongs to the mitochondrial carrier (TC 2.A.29) family. Monomer.

Its subcellular location is the mitochondrion inner membrane. The catalysed reaction is ADP(in) + ATP(out) = ADP(out) + ATP(in). Its activity is regulated as follows. The matrix-open state (m-state) is inhibited by the membrane-permeable bongkrekic acid (BKA). The cytoplasmic-open state (c-state) is inhibited by the membrane-impermeable toxic inhibitor carboxyatractyloside (CATR). Functionally, ADP:ATP antiporter that mediates import of ADP into the mitochondrial matrix for ATP synthesis, and export of ATP out to fuel the cell. Cycles between the cytoplasmic-open state (c-state) and the matrix-open state (m-state): operates by the alternating access mechanism with a single substrate-binding site intermittently exposed to either the cytosolic (c-state) or matrix (m-state) side of the inner mitochondrial membrane. This Gossypium hirsutum (Upland cotton) protein is ADP,ATP carrier protein 1, mitochondrial (ANT1).